Here is a 188-residue protein sequence, read N- to C-terminus: Ribosome-recycling factor (188 aa).

This sequence belongs to the RRF family.

It is found in the cytoplasm. Responsible for the release of ribosomes from messenger RNA at the termination of protein biosynthesis. May increase the efficiency of translation by recycling ribosomes from one round of translation to another. This Cereibacter sphaeroides (strain ATCC 17029 / ATH 2.4.9) (Rhodobacter sphaeroides) protein is Ribosome-recycling factor.